Here is a 138-residue protein sequence, read N- to C-terminus: uncharacterized protein (138 aa).

Transmembrane regions (helical) follow at residues 1–21 and 46–66; these read MEIG…EAIV and YAFI…HKFV.

It localises to the cell membrane. This is an uncharacterized protein from Methanocaldococcus jannaschii (strain ATCC 43067 / DSM 2661 / JAL-1 / JCM 10045 / NBRC 100440) (Methanococcus jannaschii).